We begin with the raw amino-acid sequence, 496 residues long: Probable G-protein coupled receptor Mth-like 5 (496 aa).

At 1–219 the chain is on the extracellular side; sequence MLVKTLGAHF…SNFLLRKILN (219 aa). N-linked (GlcNAc...) asparagine glycosylation occurs at Asn-82. The chain crosses the membrane as a helical span at residues 220–240; it reads PIFHGISLVILLVIAIIYFIL. The Cytoplasmic segment spans residues 241 to 246; sequence PTLRDL. Residues 247 to 267 traverse the membrane as a helical segment; that stretch reads VGNIVTTIAMCLMVSQAADLV. Residues 268–276 lie on the Extracellular side of the membrane; it reads RIFTELTSH. Residues 277–297 traverse the membrane as a helical segment; sequence VSFIVADIILCFSLLAAFFWL. Residues 298-327 lie on the Cytoplasmic side of the membrane; sequence NSFGFYIWKTFRSRNVFLRVTDGRKYCYYS. Residues 328 to 348 form a helical membrane-spanning segment; the sequence is AYAWGCTATMAALAVFAHFFL. Residues 349 to 366 lie on the Extracellular side of the membrane; that stretch reads DAESYKQEHMVGEQETIG. A helical membrane pass occupies residues 367 to 387; the sequence is WLGICIFFAPIACTILVNIFF. Residues 388–411 lie on the Cytoplasmic side of the membrane; sequence YVTTRKLINRRTVYGRIAHKLKAN. A helical transmembrane segment spans residues 412–432; that stretch reads FIMFSLMLLVMSIAWLFLIMS. Topologically, residues 433–438 are extracellular; that stretch reads WLQMEG. Residues 439-459 form a helical membrane-spanning segment; that stretch reads LLYAHIVVNALQTPLLLYICV. Topologically, residues 460 to 496 are cytoplasmic; sequence LRQRHVTFLLKKTCCYNEPPSANDWGDELHYMNGNDY.

Belongs to the G-protein coupled receptor 2 family. Mth subfamily.

The protein resides in the cell membrane. The chain is Probable G-protein coupled receptor Mth-like 5 (mthl5) from Drosophila melanogaster (Fruit fly).